The sequence spans 316 residues: tRNA uridine(34) hydroxylase (316 aa).

The 95-residue stretch at 123–217 (LSDDTVVIDA…YGKDPETKGE (95 aa)) folds into the Rhodanese domain. Residue C177 is the Cysteine persulfide intermediate of the active site.

It belongs to the TrhO family.

It catalyses the reaction uridine(34) in tRNA + AH2 + O2 = 5-hydroxyuridine(34) in tRNA + A + H2O. Catalyzes oxygen-dependent 5-hydroxyuridine (ho5U) modification at position 34 in tRNAs. The protein is tRNA uridine(34) hydroxylase of Staphylococcus saprophyticus subsp. saprophyticus (strain ATCC 15305 / DSM 20229 / NCIMB 8711 / NCTC 7292 / S-41).